A 1070-amino-acid polypeptide reads, in one-letter code: Duffy receptor gamma form (1070 aa).

Positions 1 to 21 are cleaved as a signal peptide; sequence MEGKKKRPLFFLLVLLLSHKA. At 22-1003 the chain is on the extracellular side; sequence NNVLFERMNG…SYECFTKGSS (982 aa). N-linked (GlcNAc...) asparagine glycans are attached at residues Asn-134 and Asn-179. 2 disulfides stabilise this stretch: Cys-214/Cys-243 and Cys-227/Cys-234. The short motif at 279 to 281 is the Cell attachment site element; the sequence is RGD. Cystine bridges form between Cys-296/Cys-372, Cys-410/Cys-427, Cys-422/Cys-502, and Cys-431/Cys-500. Residues 518–912 form a disordered region; it reads VGSGVESKAP…LNNRKLNRDQ (395 aa). Polar residues predominate over residues 526–541; that stretch reads APSSNPINEAVKSSSG. Composition is skewed to basic and acidic residues over residues 544–559, 672–707, and 714–731; these read KVQE…EGEG, GEVH…DDRS, and HTDE…KDTE. Residue Asn-676 is glycosylated (N-linked (GlcNAc...) asparagine). Positions 732–763 are enriched in polar residues; it reads TTGGSTLTPEQNVSVASDNGNVPGSGNKQNEG. Asn-743 is a glycosylation site (N-linked (GlcNAc...) asparagine). The span at 766-776 shows a compositional bias: low complexity; that stretch reads ALSGAESLESS. The N-linked (GlcNAc...) asparagine glycan is linked to Asn-785. Positions 796–807 are enriched in basic and acidic residues; that stretch reads GNEKDFQKHDFM. Residues 814–863 show a composition bias toward low complexity; it reads DQTSSDHTSSDQTSSDQTSSDQTSSDQTSSDQTSSDQTSSDQTSSDQTID. Basic and acidic residues predominate over residues 864–888; it reads TEGHHRDNVRNPEIKSSEDMSKGDF. Over residues 890 to 906 the composition is skewed to polar residues; sequence RNSNSNELYSHNNLNNR. Asn-936 is a glycosylation site (N-linked (GlcNAc...) asparagine). The chain crosses the membrane as a helical span at residues 1004–1025; sequence TGIVYFATGGAFLIILLLFASW. Topologically, residues 1026–1070 are cytoplasmic; the sequence is NAASNDYEEEATFDEFEEYCYNIHRTPQMPNDIEHMQQFTPLDYS.

The protein resides in the membrane. Binds to Neu5Gc-sialylated receptors on macaque erythrocytes. This chain is Duffy receptor gamma form, found in Plasmodium knowlesi.